Consider the following 155-residue polypeptide: uncharacterized protein (155 aa).

Residues 1–23 form the signal peptide; the sequence is MTILSLSRFMLAGVLLASFNASA.

It to E.coli YfjT.

This is an uncharacterized protein from Escherichia coli (strain K12).